Here is a 304-residue protein sequence, read N- to C-terminus: Glycine--tRNA ligase alpha subunit (304 aa).

The protein belongs to the class-II aminoacyl-tRNA synthetase family. Tetramer of two alpha and two beta subunits.

The protein resides in the cytoplasm. The catalysed reaction is tRNA(Gly) + glycine + ATP = glycyl-tRNA(Gly) + AMP + diphosphate. This chain is Glycine--tRNA ligase alpha subunit, found in Pectobacterium atrosepticum (strain SCRI 1043 / ATCC BAA-672) (Erwinia carotovora subsp. atroseptica).